The sequence spans 153 residues: D-aminoacyl-tRNA deacylase (153 aa).

The Gly-cisPro motif, important for rejection of L-amino acids signature appears at 137 to 138 (GP).

The protein belongs to the DTD family. In terms of assembly, homodimer.

The protein localises to the cytoplasm. The enzyme catalyses glycyl-tRNA(Ala) + H2O = tRNA(Ala) + glycine + H(+). The catalysed reaction is a D-aminoacyl-tRNA + H2O = a tRNA + a D-alpha-amino acid + H(+). In terms of biological role, an aminoacyl-tRNA editing enzyme that deacylates mischarged D-aminoacyl-tRNAs. Also deacylates mischarged glycyl-tRNA(Ala), protecting cells against glycine mischarging by AlaRS. Acts via tRNA-based rather than protein-based catalysis; rejects L-amino acids rather than detecting D-amino acids in the active site. By recycling D-aminoacyl-tRNA to D-amino acids and free tRNA molecules, this enzyme counteracts the toxicity associated with the formation of D-aminoacyl-tRNA entities in vivo and helps enforce protein L-homochirality. The chain is D-aminoacyl-tRNA deacylase from Methylococcus capsulatus (strain ATCC 33009 / NCIMB 11132 / Bath).